Reading from the N-terminus, the 113-residue chain is Cytochrome c55X (113 aa).

An N-terminal signal peptide occupies residues 1 to 26 (MTVARHAVSRLGLALASFLLFPLALA). Heme c contacts are provided by Cys-45, Cys-48, and His-49.

In terms of processing, binds 1 heme c group covalently per subunit.

It localises to the periplasm. In terms of biological role, monoheme c-type cytochrome. This chain is Cytochrome c55X (nirC), found in Stutzerimonas stutzeri (Pseudomonas stutzeri).